Consider the following 295-residue polypeptide: UDP-N-acetylenolpyruvoylglucosamine reductase (295 aa).

The region spanning 23–188 is the FAD-binding PCMH-type domain; it reads KVGGPADFLA…ISAKFALKPG (166 aa). Residue Arg-167 is part of the active site. Ser-217 serves as the catalytic Proton donor. Glu-287 is a catalytic residue.

It belongs to the MurB family. It depends on FAD as a cofactor.

The protein resides in the cytoplasm. The catalysed reaction is UDP-N-acetyl-alpha-D-muramate + NADP(+) = UDP-N-acetyl-3-O-(1-carboxyvinyl)-alpha-D-glucosamine + NADPH + H(+). It functions in the pathway cell wall biogenesis; peptidoglycan biosynthesis. Cell wall formation. This is UDP-N-acetylenolpyruvoylglucosamine reductase from Streptococcus pyogenes serotype M6 (strain ATCC BAA-946 / MGAS10394).